Consider the following 415-residue polypeptide: Alpha-1,3/1,6-mannosyltransferase ALG2 (415 aa).

Over 1–84 (MAENLYRARS…LPRSLGWGGR (84 aa)) the chain is Cytoplasmic. Residues 85–105 (GAAICSYVRMVFLALYVLFLS) constitute an intramembrane region (helical). Residues 106–415 (GEEFDVVVCD…QLYQYVTKLV (310 aa)) are Cytoplasmic-facing.

It belongs to the glycosyltransferase group 1 family. Glycosyltransferase 4 subfamily.

The protein localises to the endoplasmic reticulum membrane. The catalysed reaction is a beta-D-Man-(1-&gt;4)-beta-D-GlcNAc-(1-&gt;4)-alpha-D-GlcNAc-diphospho-di-trans,poly-cis-dolichol + GDP-alpha-D-mannose = an alpha-D-Man-(1-&gt;3)-beta-D-Man-(1-&gt;4)-beta-D-GlcNAc-(1-&gt;4)-alpha-D-GlcNAc-diphospho-di-trans,poly-cis-dolichol + GDP + H(+). It catalyses the reaction an alpha-D-Man-(1-&gt;3)-beta-D-Man-(1-&gt;4)-beta-D-GlcNAc-(1-&gt;4)-alpha-D-GlcNAc-diphospho-di-trans,poly-cis-dolichol + GDP-alpha-D-mannose = an alpha-D-Man-(1-&gt;3)-[alpha-D-Man-(1-&gt;6)]-beta-D-Man-(1-&gt;4)-beta-D-GlcNAc-(1-&gt;4)-alpha-D-GlcNAc-diphospho-di-trans,poly-cis-dolichol + GDP + H(+). The enzyme catalyses a beta-D-Man-(1-&gt;4)-beta-D-GlcNAc-(1-&gt;4)-alpha-D-GlcNAc-diphospho-di-trans,poly-cis-dolichol + GDP-alpha-D-mannose = an alpha-D-Man-(1-&gt;6)-beta-D-Man-(1-&gt;4)-beta-D-GlcNAc-(1-&gt;4)-alpha-D-GlcNAc-diphospho-di-trans,poly-cis-dolichol + GDP + H(+). It carries out the reaction an alpha-D-Man-(1-&gt;6)-beta-D-Man-(1-&gt;4)-beta-D-GlcNAc-(1-&gt;4)-alpha-D-GlcNAc-diphospho-di-trans,poly-cis-dolichol + GDP-alpha-D-mannose = an alpha-D-Man-(1-&gt;3)-[alpha-D-Man-(1-&gt;6)]-beta-D-Man-(1-&gt;4)-beta-D-GlcNAc-(1-&gt;4)-alpha-D-GlcNAc-diphospho-di-trans,poly-cis-dolichol + GDP + H(+). It participates in protein modification; protein glycosylation. In terms of biological role, mannosyltransferase that operates in the biosynthetic pathway of dolichol-linked oligosaccharides, the glycan precursors employed in protein asparagine (N)-glycosylation. The assembly of dolichol-linked oligosaccharides begins on the cytosolic side of the endoplasmic reticulum membrane and finishes in its lumen. The sequential addition of sugars to dolichol pyrophosphate produces dolichol-linked oligosaccharides containing fourteen sugars, including two GlcNAcs, nine mannoses and three glucoses. Once assembled, the oligosaccharide is transferred from the lipid to nascent proteins by oligosaccharyltransferases. Catalyzes, on the cytoplasmic face of the endoplasmic reticulum, the addition of the second and third mannose residues to the dolichol-linked oligosaccharide chain, to produce Man3GlcNAc(2)-PP-dolichol core oligosaccharide. Man3GlcNAc(2)-PP-dolichol is a substrate for ALG11, the following enzyme in the biosynthetic pathway. While both alpha 1,3 and alpha 1,6 linkages are possible, the sequential addition of alpha 1,3 followed by alpha 1,6 is probably the preferred route. This Mus musculus (Mouse) protein is Alpha-1,3/1,6-mannosyltransferase ALG2 (Alg2).